We begin with the raw amino-acid sequence, 432 residues long: Protein distal antenna-related (432 aa).

The HTH psq-type domain occupies 15-66 (TRGKRPLRNLTPNDKVRAIQRIHNGETKASVSRDLGVPESTLRGWCKNEQKL). The H-T-H motif DNA-binding region spans 42 to 62 (KASVSRDLGVPESTLRGWCKN). Disordered stretches follow at residues 195–221 (ESADTDIKSPQSTTDITDTAREENSTK) and 401–432 (SCASVSSRNNSRSQTPDKSTATSIACLSDGEQ). Composition is skewed to polar residues over residues 202-211 (KSPQSTTDIT) and 401-425 (SCASVSSRNNSRSQTPDKSTATSIA).

Interacts with itself, dan, ey and dac to form a complex (or complexes) containing the RD factors.

It localises to the nucleus. Functionally, probable transcription factor with a role in the retinal determination (RD) network. Regulates ato expression and is required for normal R8 induction and differentiation. Danr appears to repress Dan expression, but Dan is required for Danr expression anterior to the morphogenetic furrow (MF). Dan and Danr lie downstream of so and require dac function for highest levels of expression. Contributes to differentiation of antenna-specific characteristics; effector gene that acts downstream of homothorax (hth), Distal-less (Dll), cut (ct) and spineless (ss) genes to control differentiation of distal antennal structures. The chain is Protein distal antenna-related from Drosophila pseudoobscura pseudoobscura (Fruit fly).